A 103-amino-acid chain; its full sequence is MYAVIQTGGKQYRVQPGDKVKVESLDAEAGQEVAFEKVLLIQSDDGVKIGQPFVSGGKVTGTVVAHGRHPKIRIIKFRRRKHHMKQAGHRQNYTEVQINEISA.

The protein belongs to the bacterial ribosomal protein bL21 family. Part of the 50S ribosomal subunit. Contacts protein L20.

Its function is as follows. This protein binds to 23S rRNA in the presence of protein L20. The protein is Large ribosomal subunit protein bL21 of Methylococcus capsulatus (strain ATCC 33009 / NCIMB 11132 / Bath).